The chain runs to 491 residues: Glutamyl-tRNA(Gln) amidotransferase subunit A (491 aa).

Active-site charge relay system residues include Lys-79 and Ser-158. The active-site Acyl-ester intermediate is the Ser-182.

The protein belongs to the amidase family. GatA subfamily. Heterotrimer of A, B and C subunits.

The catalysed reaction is L-glutamyl-tRNA(Gln) + L-glutamine + ATP + H2O = L-glutaminyl-tRNA(Gln) + L-glutamate + ADP + phosphate + H(+). In terms of biological role, allows the formation of correctly charged Gln-tRNA(Gln) through the transamidation of misacylated Glu-tRNA(Gln) in organisms which lack glutaminyl-tRNA synthetase. The reaction takes place in the presence of glutamine and ATP through an activated gamma-phospho-Glu-tRNA(Gln). In Maricaulis maris (strain MCS10) (Caulobacter maris), this protein is Glutamyl-tRNA(Gln) amidotransferase subunit A.